The chain runs to 1574 residues: Multiple epidermal growth factor-like domains protein 6 (1574 aa).

The signal sequence occupies residues 1–27; sequence MPVRAEARAAWRVVALALLLLPAMPAA. In terms of domain architecture, EMI spans 40 to 122; sequence MPHVCAEQKL…QKPGQEGCLS (83 aa). Cystine bridges form between Cys-44/Cys-108, Cys-74/Cys-80, Cys-107/Cys-120, Cys-127/Cys-138, Cys-134/Cys-147, Cys-149/Cys-162, Cys-168/Cys-179, Cys-175/Cys-188, Cys-190/Cys-203, Cys-209/Cys-220, Cys-216/Cys-230, Cys-232/Cys-245, Cys-251/Cys-262, Cys-258/Cys-271, Cys-273/Cys-286, Cys-292/Cys-303, Cys-299/Cys-312, Cys-314/Cys-327, Cys-338/Cys-349, Cys-345/Cys-358, Cys-360/Cys-373, Cys-379/Cys-389, Cys-385/Cys-398, Cys-400/Cys-411, Cys-419/Cys-430, Cys-426/Cys-439, Cys-441/Cys-454, Cys-524/Cys-537, Cys-531/Cys-544, Cys-546/Cys-555, Cys-568/Cys-580, Cys-574/Cys-587, Cys-589/Cys-598, Cys-611/Cys-623, Cys-617/Cys-630, Cys-632/Cys-641, Cys-654/Cys-668, Cys-660/Cys-675, Cys-677/Cys-686, Cys-699/Cys-711, Cys-705/Cys-718, Cys-722/Cys-731, Cys-744/Cys-755, Cys-750/Cys-762, Cys-764/Cys-773, Cys-786/Cys-799, Cys-793/Cys-806, Cys-808/Cys-817, Cys-830/Cys-842, Cys-836/Cys-849, Cys-851/Cys-860, Cys-873/Cys-886, Cys-879/Cys-893, Cys-895/Cys-904, Cys-917/Cys-929, Cys-923/Cys-936, Cys-938/Cys-947, Cys-960/Cys-972, Cys-966/Cys-979, Cys-981/Cys-990, Cys-1003/Cys-1015, Cys-1009/Cys-1022, Cys-1024/Cys-1033, Cys-1046/Cys-1058, Cys-1052/Cys-1065, Cys-1067/Cys-1076, Cys-1089/Cys-1101, Cys-1095/Cys-1108, Cys-1110/Cys-1119, Cys-1132/Cys-1144, Cys-1138/Cys-1151, Cys-1153/Cys-1162, Cys-1175/Cys-1187, Cys-1181/Cys-1194, Cys-1196/Cys-1205, Cys-1218/Cys-1231, Cys-1224/Cys-1238, Cys-1240/Cys-1249, Cys-1262/Cys-1274, Cys-1268/Cys-1281, Cys-1283/Cys-1292, Cys-1305/Cys-1317, Cys-1311/Cys-1324, Cys-1326/Cys-1335, Cys-1348/Cys-1360, Cys-1354/Cys-1367, Cys-1369/Cys-1378, Cys-1391/Cys-1403, Cys-1397/Cys-1410, Cys-1412/Cys-1421, Cys-1434/Cys-1446, Cys-1440/Cys-1453, Cys-1455/Cys-1464, Cys-1477/Cys-1489, Cys-1483/Cys-1496, Cys-1498/Cys-1507, Cys-1520/Cys-1532, Cys-1526/Cys-1539, and Cys-1541/Cys-1550. The EGF-like 1; calcium-binding domain occupies 123 to 163; the sequence is DVDECASANGGCEGPCCNTVGGFYCRCPPGYQLQGDGKTCQ. The region spanning 164–204 is the EGF-like 2; calcium-binding domain; that stretch reads DVDECRAHNGGCQHRCVNTPGSYLCECKPGFRLHTDGRTCL. EGF-like domains are found at residues 205–246 and 247–287; these read AISS…RRCV and RRSP…KTCE. An EGF-like 5; calcium-binding domain is found at 288–328; sequence DVDECALGLAQCAHGCLNTQGSFKCVCHAGYELGADGRQCY. EGF-like domains lie at 334–374 and 375–412; these read IVNS…KTCI and DIDD…DGCG. Positions 415–455 constitute an EGF-like 8; calcium-binding domain; the sequence is DVDECASGHGGCEHHCSNLAGSFQCFCEAGYRLDEDRRGCT. EGF-like domains lie at 520 to 556, 564 to 599, 607 to 642, 650 to 687, 695 to 732, 740 to 774, 782 to 818, 826 to 861, 869 to 905, 913 to 948, 956 to 991, 999 to 1034, 1042 to 1077, 1085 to 1120, 1128 to 1163, 1171 to 1206, 1214 to 1250, 1258 to 1293, 1301 to 1336, 1344 to 1379, 1387 to 1422, 1430 to 1465, 1473 to 1508, and 1516 to 1551; these read FGHD…IICN, FGKN…AHCE, YGKH…RFCH, FGPG…ERCQ, FGPG…EDCG, FGVN…EDCG, WGLG…SRCQ, YGTG…LSCQ, WGPD…PRCE, YGPS…SFCE, FGLD…PRCA, FGLN…PTCL, YGKN…LACE, YAAG…DKCQ, FGVH…PHCE, FGEA…LSCE, FGKD…TGCL, YGPG…ADCS, FGPS…VRCE, FGKG…PHCE, YGAA…QACE, HGPG…QFCE, FGDG…AACD, and FGPG…PTCR. A compositionally biased stretch (polar residues) spans 1555–1568; the sequence is TQISSSRPAPQHPS. The segment at 1555–1574 is disordered; sequence TQISSSRPAPQHPSSRAMKH.

In terms of tissue distribution, expressed in lung.

The protein resides in the secreted. In Rattus norvegicus (Rat), this protein is Multiple epidermal growth factor-like domains protein 6 (Megf6).